A 362-amino-acid chain; its full sequence is Adenosine deaminase (362 aa).

Residues histidine 19 and histidine 21 each contribute to the Zn(2+) site. Substrate contacts are provided by histidine 21, aspartate 23, and glycine 181. A Zn(2+)-binding site is contributed by histidine 208. The active-site Proton donor is the glutamate 211. Aspartate 300 lines the Zn(2+) pocket.

This sequence belongs to the metallo-dependent hydrolases superfamily. Adenosine and AMP deaminases family. Adenosine deaminase subfamily. It depends on Zn(2+) as a cofactor.

It carries out the reaction adenosine + H2O + H(+) = inosine + NH4(+). It catalyses the reaction 2'-deoxyadenosine + H2O + H(+) = 2'-deoxyinosine + NH4(+). Catalyzes the hydrolytic deamination of adenosine and 2-deoxyadenosine. This chain is Adenosine deaminase, found in Mycobacterium sp. (strain JLS).